We begin with the raw amino-acid sequence, 123 residues long: UPF0102 protein PputGB1_4524 (123 aa).

The protein belongs to the UPF0102 family.

This chain is UPF0102 protein PputGB1_4524, found in Pseudomonas putida (strain GB-1).